A 246-amino-acid polypeptide reads, in one-letter code: MAPVELEIVYQDEYFVAVNKPAGMLVHRSWLDKHETQFVMQTLRDQIGQHVFPLHRLDRPTSGVLVFALSSEVASQVMPMFAEHKMEKTYHAIVRGWIEEEGVLDYALKVELDKIADKFASQEKEAQEAVTAYKPLAKVEVPYSTGKFPTTRYCLMEMKPKTGRKHQLRRHMAHLRHPIVGDTSHGDGKHNKLFRNEFDSHRLLLHASELRFVHPFTNEELVMKASIDDTWQQLFTRFEWDEELVK.

The active site involves D58.

Belongs to the pseudouridine synthase RluA family.

It catalyses the reaction uridine(65) in tRNA = pseudouridine(65) in tRNA. Responsible for synthesis of pseudouridine from uracil-65 in transfer RNAs. The chain is tRNA pseudouridine synthase C (truC) from Vibrio parahaemolyticus serotype O3:K6 (strain RIMD 2210633).